The primary structure comprises 301 residues: GTPase Era (301 aa).

Residues 7-175 form the Era-type G domain; it reads YCGFIAIVGR…ASIVRKHLPE (169 aa). The interval 15-22 is G1; that stretch reads GRPNVGKS. 15-22 lines the GTP pocket; the sequence is GRPNVGKS. The tract at residues 41-45 is G2; the sequence is QTTRH. Residues 62 to 65 form a G3 region; the sequence is DTPG. GTP is bound by residues 62-66 and 124-127; these read DTPGL and NKVD. Residues 124–127 form a G4 region; that stretch reads NKVD. Residues 154 to 156 are G5; the sequence is ISA. In terms of domain architecture, KH type-2 spans 206–283; that stretch reads LGAELPYSVT…HLELWVKVKS (78 aa).

This sequence belongs to the TRAFAC class TrmE-Era-EngA-EngB-Septin-like GTPase superfamily. Era GTPase family. In terms of assembly, monomer.

Its subcellular location is the cytoplasm. It localises to the cell inner membrane. In terms of biological role, an essential GTPase that binds both GDP and GTP, with rapid nucleotide exchange. Plays a role in 16S rRNA processing and 30S ribosomal subunit biogenesis and possibly also in cell cycle regulation and energy metabolism. The sequence is that of GTPase Era from Salmonella arizonae (strain ATCC BAA-731 / CDC346-86 / RSK2980).